A 321-amino-acid polypeptide reads, in one-letter code: Glucokinase (321 aa).

Residue 8–13 participates in ATP binding; that stretch reads GDVGGT.

The protein belongs to the bacterial glucokinase family.

The protein localises to the cytoplasm. It catalyses the reaction D-glucose + ATP = D-glucose 6-phosphate + ADP + H(+). The protein is Glucokinase of Escherichia coli (strain SMS-3-5 / SECEC).